The chain runs to 504 residues: 13S globulin seed storage protein 2 (504 aa).

The first 20 residues, 1–20, serve as a signal peptide directing secretion; that stretch reads MSTKLILSFSLCLMVLSCSA. Cystine bridges form between C46-C79 and C122-C320. Residues 51 to 265 form the Cupin type-1 1 domain; that stretch reads LTASEPSRRV…FRDVDRETIS (215 aa). 3 disordered regions span residues 128 to 158, 214 to 237, and 289 to 314; these read SDSE…GDQH, GQSQ…DDEA, and QDFE…RSNG. Basic and acidic residues-rich tracts occupy residues 144-158 and 218-231; these read RQSE…GDQH and RETR…QSRE. Residues 326–475 enclose the Cupin type-1 2 domain; it reads RNFNTPTNTY…SYDISTKEAY (150 aa).

Belongs to the 11S seed storage protein (globulins) family. Hexamer; each subunit is composed of an acidic and a basic chain derived from a single precursor and linked by a disulfide bond.

Seed storage protein. The chain is 13S globulin seed storage protein 2 (FA18) from Fagopyrum esculentum (Common buckwheat).